Consider the following 479-residue polypeptide: GTPase Der (479 aa).

EngA-type G domains are found at residues 3–166 and 192–365; these read PVVA…AEEY and LKLA…ASAT. GTP-binding positions include 9–16, 56–60, 118–121, 198–205, 245–249, and 310–313; these read GRPNVGKS, DTGGI, NKID, DTAGV, and NKWD. The 85-residue stretch at 366–450 folds into the KH-like domain; the sequence is QRISTSKLTK…PIKVEFREPV (85 aa).

The protein belongs to the TRAFAC class TrmE-Era-EngA-EngB-Septin-like GTPase superfamily. EngA (Der) GTPase family. As to quaternary structure, associates with the 50S ribosomal subunit.

In terms of biological role, GTPase that plays an essential role in the late steps of ribosome biogenesis. This is GTPase Der from Idiomarina loihiensis (strain ATCC BAA-735 / DSM 15497 / L2-TR).